The sequence spans 170 residues: Cathelicidin antimicrobial peptide (170 aa).

The first 30 residues, 1–30 (MKTQRDGPSLGRWSLVLLLLGLTMPLAVIA), serve as a signal peptide directing secretion. A propeptide spans 31–131 (RVLSYQEAVL…DISCDKDKRK (101 aa)) (cathelin-like domain (CLD)). Disulfide bonds link Cys-86–Cys-97 and Cys-108–Cys-125. An active core region spans residues 150–162 (LKNIGQRIKDFFG).

It belongs to the cathelicidin family. As to quaternary structure, monomer, homodimer or homotrimer (in vitro). Oligomerizes as tetra- or hexamer in solution (in vitro). Post-translationally, proteolytically cleaved by proteinase PRTN3 into antibacterial peptide LL-37. Proteolytically cleaved by cathepsin CTSG and neutrophil elastase ELANE. Resistant to proteolytic degradation in solution, and when bound to both zwitterionic (mimicking mammalian membranes) and negatively charged membranes (mimicking bacterial membranes). In terms of processing, after secretion onto the skin surface, the CAMP gene product is processed by a serine protease-dependent mechanism into multiple novel antimicrobial peptides distinct from and shorter than cathelicidin LL-37. These peptides show enhanced antimicrobial action, acquiring the ability to kill skin pathogens such as S.aureus, E.coli and C.albicans. These peptides have lost the ability to stimulate CXCL8/IL8 release from keratinocytes. The peptides act synergistically, killing bacteria at lower concentrations when present together, and maintain activity at increased salt condition.

The protein localises to the secreted. It localises to the vesicle. Its function is as follows. Antimicrobial protein that is an integral component of the innate immune system. Binds to bacterial lipopolysaccharides (LPS). Acts via neutrophil N-formyl peptide receptors to enhance the release of CXCL2. Postsecretory processing generates multiple cathelicidin antimicrobial peptides with various lengths which act as a topical antimicrobial defense in sweat on skin. The unprocessed precursor form, cathelicidin antimicrobial peptide, inhibits the growth of Gram-negative E.coli and E.aerogenes with efficiencies comparable to that of the mature peptide LL-37 (in vitro). Antimicrobial peptide that is an integral component of the innate immune system. Binds to bacterial lipopolysaccharides (LPS). Causes membrane permeabilization by forming transmembrane pores (in vitro). Causes lysis of E.coli. Exhibits antimicrobial activity against Gram-negative bacteria such as P.aeruginosa, S.typhimurium, E.aerogenes, E.coli and P.syringae, Gram-positive bacteria such as L.monocytogenes, S.epidermidis, S.pyogenes and S.aureus, as well as vancomycin-resistant enterococci (in vitro). Exhibits antimicrobial activity against methicillin-resistant S.aureus, P.mirabilis, and C.albicans in low-salt media, but not in media containing 100 mM NaCl (in vitro). Forms chiral supramolecular assemblies with quinolone signal (PQS) molecules of P.aeruginosa, which may lead to interference of bacterial quorum signaling and perturbance of bacterial biofilm formation. May form supramolecular fiber-like assemblies on bacterial membranes. Induces cytokine and chemokine producation as well as TNF/TNFA and CSF2/GMCSF production in normal human keratinocytes. Exhibits hemolytic activity against red blood cells. Functionally, exhibits antimicrobial activity against E.coli and B.megaterium (in vitro). This chain is Cathelicidin antimicrobial peptide, found in Ateles fusciceps robustus (Colombian black-faced spider monkey).